A 75-amino-acid polypeptide reads, in one-letter code: ATP synthase subunit c (75 aa).

2 helical membrane-spanning segments follow: residues 8 to 28 (FLGIGLSVVGMLGAAIGVSNI) and 54 to 74 (AALTEAMGLFSFVLALLLIFV).

Belongs to the ATPase C chain family. As to quaternary structure, F-type ATPases have 2 components, F(1) - the catalytic core - and F(0) - the membrane proton channel. F(1) has five subunits: alpha(3), beta(3), gamma(1), delta(1), epsilon(1). F(0) has three main subunits: a(1), b(2) and c(10-14). The alpha and beta chains form an alternating ring which encloses part of the gamma chain. F(1) is attached to F(0) by a central stalk formed by the gamma and epsilon chains, while a peripheral stalk is formed by the delta and b chains.

The protein resides in the cell inner membrane. F(1)F(0) ATP synthase produces ATP from ADP in the presence of a proton or sodium gradient. F-type ATPases consist of two structural domains, F(1) containing the extramembraneous catalytic core and F(0) containing the membrane proton channel, linked together by a central stalk and a peripheral stalk. During catalysis, ATP synthesis in the catalytic domain of F(1) is coupled via a rotary mechanism of the central stalk subunits to proton translocation. Its function is as follows. Key component of the F(0) channel; it plays a direct role in translocation across the membrane. A homomeric c-ring of between 10-14 subunits forms the central stalk rotor element with the F(1) delta and epsilon subunits. The polypeptide is ATP synthase subunit c (Neorickettsia sennetsu (strain ATCC VR-367 / Miyayama) (Ehrlichia sennetsu)).